The following is a 423-amino-acid chain: Gamma-glutamyl phosphate reductase (423 aa).

This sequence belongs to the gamma-glutamyl phosphate reductase family.

Its subcellular location is the cytoplasm. It catalyses the reaction L-glutamate 5-semialdehyde + phosphate + NADP(+) = L-glutamyl 5-phosphate + NADPH + H(+). The protein operates within amino-acid biosynthesis; L-proline biosynthesis; L-glutamate 5-semialdehyde from L-glutamate: step 2/2. In terms of biological role, catalyzes the NADPH-dependent reduction of L-glutamate 5-phosphate into L-glutamate 5-semialdehyde and phosphate. The product spontaneously undergoes cyclization to form 1-pyrroline-5-carboxylate. In Pseudomonas putida (strain GB-1), this protein is Gamma-glutamyl phosphate reductase.